The primary structure comprises 323 residues: tRNA U34 carboxymethyltransferase (323 aa).

Residues Lys-93, Trp-107, Lys-112, Gly-132, 154 to 156 (DPS), 182 to 183 (VE), Met-197, Tyr-201, and Arg-316 contribute to the carboxy-S-adenosyl-L-methionine site.

Belongs to the class I-like SAM-binding methyltransferase superfamily. CmoB family. In terms of assembly, homotetramer.

The catalysed reaction is carboxy-S-adenosyl-L-methionine + 5-hydroxyuridine(34) in tRNA = 5-carboxymethoxyuridine(34) in tRNA + S-adenosyl-L-homocysteine + H(+). Catalyzes carboxymethyl transfer from carboxy-S-adenosyl-L-methionine (Cx-SAM) to 5-hydroxyuridine (ho5U) to form 5-carboxymethoxyuridine (cmo5U) at position 34 in tRNAs. The sequence is that of tRNA U34 carboxymethyltransferase from Pseudoalteromonas atlantica (strain T6c / ATCC BAA-1087).